The primary structure comprises 1311 residues: Ubiquitin carboxyl-terminal hydrolase 36 (1311 aa).

Low complexity-rich tracts occupy residues 120-134 (AAAATNNGNSNSAGS) and 156-174 (STPTTTTTQTSSSSTSSSS). The segment at 120 to 189 (AAAATNNGNS…NPNELPKPKR (70 aa)) is disordered. A USP domain is found at 212 to 533 (AGMINVGNTC…NSYIMFYELD (322 aa)). Catalysis depends on C221, which acts as the Nucleophile. H492 functions as the Proton acceptor in the catalytic mechanism. Positions 546 to 575 (NGLRQLSNGHHHHQQQQQQHQQQQQQQPTV) are disordered. Residues 560 to 572 (QQQQQHQQQQQQQ) show a composition bias toward low complexity. S581 carries the post-translational modification Phosphoserine. Disordered regions lie at residues 587–620 (TRFIGPQLPPGGLNGYAMTTTTTATNNTTNGHSQ), 640–1095 (KFQE…GCLN), and 1136–1311 (DHGD…QQQS). 3 stretches are compositionally biased toward low complexity: residues 605–616 (TTTTTATNNTTN), 660–716 (APAV…QQQQ), and 759–774 (TLTLTPTTTPTASTPT). T767 carries the post-translational modification Phosphothreonine. Phosphoserine is present on residues S787 and S789. A compositionally biased stretch (low complexity) spans 795–826 (SSGTPSSSTPTTTTTAAAAAASSPMQATAAAT). Residues 836–853 (ARKRSLPDHHHHHPHHHV) show a composition bias toward basic residues. A compositionally biased stretch (polar residues) spans 869-879 (PATNFNSSSSK). Positions 880-889 (QKTDAIDEIF) are enriched in basic and acidic residues. A compositionally biased stretch (basic residues) spans 896-905 (NKKRINNKNQ). The span at 910 to 920 (GDEEEDDEETL) shows a compositional bias: acidic residues. Low complexity-rich tracts occupy residues 925–942 (NNSSRLVSSSTNTSPTTN) and 950–979 (VSSSSSNSKNVSTSAAAAAATTSSSTSTSA). The span at 980-989 (PPSPKTPPSP) shows a compositional bias: pro residues. S982 carries the phosphoserine modification. T985 bears the Phosphothreonine mark. S988 carries the phosphoserine modification. Residues 1006–1020 (DDDDDEEEEDEDDEE) are compositionally biased toward acidic residues. Residues 1037–1050 (PFSSQQKPTPSPST) are compositionally biased toward low complexity. A Phosphoserine modification is found at S1047. At T1050 the chain carries Phosphothreonine. The span at 1060–1081 (FNGTSSSTPHVGNGYQSEPSTP) shows a compositional bias: polar residues. 2 stretches are compositionally biased toward low complexity: residues 1154–1176 (VVTTTTTTTTTTKNTTKTLTADA) and 1204–1221 (TANGKSSGNSNNTTPGYN). The segment covering 1246–1255 (QHASSSYRSN) has biased composition (polar residues). A compositionally biased stretch (gly residues) spans 1267 to 1276 (GGNGGGGSGG).

This sequence belongs to the peptidase C19 family. Interacts with atms/PAF1, but not with CycT.

It is found in the nucleus. It localises to the nucleolus. The enzyme catalyses Thiol-dependent hydrolysis of ester, thioester, amide, peptide and isopeptide bonds formed by the C-terminal Gly of ubiquitin (a 76-residue protein attached to proteins as an intracellular targeting signal).. Required for maintaining multiple types of adult stem cells, including male and female germline, epithelial follicle cell and intestinal stem cells. May function as a transcriptional repressor by continually deubiquiting histone H2B at the promoters of genes critical for cellular differentiation, thereby preventing histone H3 'Lys-4' trimethylation (H3K4). Controls selective autophagy activation by ubiquitinated proteins. The protein is Ubiquitin carboxyl-terminal hydrolase 36 (Usp36) of Drosophila willistoni (Fruit fly).